A 374-amino-acid polypeptide reads, in one-letter code: Chaperone protein DnaJ (374 aa).

The J domain maps to 5–70; that stretch reads DYYEILGVSR…QKRAAYDQYG (66 aa). The CR-type zinc-finger motif lies at 129–207; that stretch reads GVTREIRIPT…CHGHGRVEKS (79 aa). Positions 142, 145, 159, 162, 181, 184, 195, and 198 each coordinate Zn(2+). 4 CXXCXGXG motif repeats span residues 142–149, 159–166, 181–188, and 195–202; these read CDVCHGSG, CPTCHGQG, CPTCQGQG, and CTKCHGHG.

It belongs to the DnaJ family. Homodimer. Requires Zn(2+) as cofactor.

It is found in the cytoplasm. Functionally, participates actively in the response to hyperosmotic and heat shock by preventing the aggregation of stress-denatured proteins and by disaggregating proteins, also in an autonomous, DnaK-independent fashion. Unfolded proteins bind initially to DnaJ; upon interaction with the DnaJ-bound protein, DnaK hydrolyzes its bound ATP, resulting in the formation of a stable complex. GrpE releases ADP from DnaK; ATP binding to DnaK triggers the release of the substrate protein, thus completing the reaction cycle. Several rounds of ATP-dependent interactions between DnaJ, DnaK and GrpE are required for fully efficient folding. Also involved, together with DnaK and GrpE, in the DNA replication of plasmids through activation of initiation proteins. The chain is Chaperone protein DnaJ from Sodalis glossinidius (strain morsitans).